The sequence spans 497 residues: Probable cytosol aminopeptidase (497 aa).

2 residues coordinate Mn(2+): K263 and D268. K275 is a catalytic residue. Mn(2+)-binding residues include D286, D345, and E347. The active site involves R349.

Belongs to the peptidase M17 family. Mn(2+) serves as cofactor.

The protein resides in the cytoplasm. The enzyme catalyses Release of an N-terminal amino acid, Xaa-|-Yaa-, in which Xaa is preferably Leu, but may be other amino acids including Pro although not Arg or Lys, and Yaa may be Pro. Amino acid amides and methyl esters are also readily hydrolyzed, but rates on arylamides are exceedingly low.. It carries out the reaction Release of an N-terminal amino acid, preferentially leucine, but not glutamic or aspartic acids.. Its function is as follows. Presumably involved in the processing and regular turnover of intracellular proteins. Catalyzes the removal of unsubstituted N-terminal amino acids from various peptides. The sequence is that of Probable cytosol aminopeptidase from Methylorubrum populi (strain ATCC BAA-705 / NCIMB 13946 / BJ001) (Methylobacterium populi).